Reading from the N-terminus, the 156-residue chain is V-type proton ATPase 16 kDa proteolipid subunit c (156 aa).

Residues 1–7 (MAENPIY) are Lumenal-facing. Residues 8–30 (GPFFGVMGAASAIIFSALGAAYG) form a helical membrane-spanning segment. Topologically, residues 31–52 (TAKSGTGIAAMSVMRPELIMKS) are cytoplasmic. Residues 53–73 (IIPVVMAGIIAIYGLVVAVLI) form a helical membrane-spanning segment. Residues 74–92 (AGSLDAPSNNYTLYKGFIH) are Lumenal-facing. The chain crosses the membrane as a helical span at residues 93-114 (LGAGLAVGFSGLAAGFAIGIVG). Residues 115 to 126 (DAGVRGTAQQPR) are Cytoplasmic-facing. Residues 127–152 (LFVGMILILIFAEVLGLYGLIVAIYL) form a helical membrane-spanning segment. At 153-156 (YTKQ) the chain is on the lumenal side.

Belongs to the V-ATPase proteolipid subunit family. V-ATPase is a heteromultimeric enzyme made up of two complexes: the ATP-hydrolytic V1 complex and the proton translocation V0 complex. The V1 complex consists of three catalytic AB heterodimers that form a heterohexamer, three peripheral stalks each consisting of EG heterodimers, one central rotor including subunits D and F, and the regulatory subunits C and H. The proton translocation complex V0 consists of the proton transport subunit a, a ring of proteolipid subunits c9c'', rotary subunit d, subunits e and f, and the accessory subunits VhaAC45 and ATP6AP2.

The protein resides in the membrane. Its function is as follows. Proton-conducting pore forming subunit of the V0 complex of vacuolar(H+)-ATPase (V-ATPase), a multisubunit enzyme composed of a peripheral complex (V1) that hydrolyzes ATP and a membrane integral complex (V0) that translocates protons. V-ATPase is responsible for acidifying and maintaining the pH of intracellular compartments and in some cell types, is targeted to the plasma membrane, where it is responsible for acidifying the extracellular environment. In Heliothis virescens (Tobacco budworm moth), this protein is V-type proton ATPase 16 kDa proteolipid subunit c (VHA16).